The following is a 284-amino-acid chain: ATP phosphoribosyltransferase (284 aa).

The protein belongs to the ATP phosphoribosyltransferase family. Long subfamily. As to quaternary structure, equilibrium between an active dimeric form, an inactive hexameric form and higher aggregates. Interconversion between the various forms is largely reversible and is influenced by the natural substrates and inhibitors of the enzyme. Mg(2+) serves as cofactor.

Its subcellular location is the cytoplasm. The enzyme catalyses 1-(5-phospho-beta-D-ribosyl)-ATP + diphosphate = 5-phospho-alpha-D-ribose 1-diphosphate + ATP. The protein operates within amino-acid biosynthesis; L-histidine biosynthesis; L-histidine from 5-phospho-alpha-D-ribose 1-diphosphate: step 1/9. Feedback inhibited by histidine. Its function is as follows. Catalyzes the condensation of ATP and 5-phosphoribose 1-diphosphate to form N'-(5'-phosphoribosyl)-ATP (PR-ATP). Has a crucial role in the pathway because the rate of histidine biosynthesis seems to be controlled primarily by regulation of HisG enzymatic activity. The sequence is that of ATP phosphoribosyltransferase from Mycobacterium avium (strain 104).